We begin with the raw amino-acid sequence, 465 residues long: Auxin transporter-like protein 3 (465 aa).

The Cytoplasmic portion of the chain corresponds to 1 to 52; the sequence is MTSEKVETVVAGNYLEMEREEEGSKSTTGKLSKFFWHGGSVYDAWFSCASNQ. Residues 53 to 70 traverse the membrane as a helical segment; it reads VAQVLLTLPYSFSQLGML. The Extracellular segment spans residues 71–72; sequence SG. The helical transmembrane segment at 73–93 threads the bilayer; it reads ILFQIFYGLMGSWTAYIISVL. Over 94–129 the chain is Cytoplasmic; sequence YVEYRTRKEREKVDFRNHVIQWFEVLDGLLGKHWRN. A helical transmembrane segment spans residues 130–150; sequence LGLFFNCTFLLFGSVIQLIAC. Residues 151–165 lie on the Extracellular side of the membrane; it reads ASNIYYINDHLDKRT. A helical transmembrane segment spans residues 166 to 186; that stretch reads WTYIFGACCATTVFIPSFHNY. The Cytoplasmic segment spans residues 187–189; it reads RIW. The chain crosses the membrane as a helical span at residues 190 to 210; that stretch reads SFLGLVMTTYTAWYMTIASIL. Topologically, residues 211–225 are extracellular; that stretch reads HGQAEDVKHSGPTKL. Residues 226–246 traverse the membrane as a helical segment; that stretch reads VLYFTGATNILYTFGGHAVTV. Residues 247–259 are Cytoplasmic-facing; it reads EIMHAMWKPQKFK. Residues 260 to 280 form a helical membrane-spanning segment; it reads MIYLIATLYVMTLTLPSAAAV. Topologically, residues 281 to 307 are extracellular; sequence YWAFGDNLLTHSNALSLLPRTGFRDTA. A helical transmembrane segment spans residues 308–328; sequence VILMLIHQFITFGFACTPLYF. Topologically, residues 329–349 are cytoplasmic; that stretch reads VWEKFLGVHETKSLLKRALVR. Residues 350–370 form a helical membrane-spanning segment; the sequence is LPVVIPIWFLAIIFPFFGPIN. Over 371 to 374 the chain is Extracellular; sequence STVG. The chain crosses the membrane as a helical span at residues 375-395; sequence SLLVSFTVYIIPALAHMVTFA. Topologically, residues 396-421 are cytoplasmic; sequence SAPARENAVERPPSFLGGWVGLYSVN. Residues 422–442 traverse the membrane as a helical segment; it reads VFVAVWVLVVGFGLGGWASML. Topologically, residues 443 to 465 are extracellular; that stretch reads NFVHQIKTFGLFAKCFQCPPHKA.

This sequence belongs to the amino acid/polyamine transporter 2 family. Amino acid/auxin permease (AAAP) (TC 2.A.18.1) subfamily. Shoots and roots of nodulating plants. Low levels in roots, nodules, stems, petioles, leaves, shoot apices and flowers.

Its subcellular location is the cell membrane. Its function is as follows. Carrier protein involved in proton-driven auxin influx. Mediates the formation of auxin gradient from developing leaves (site of auxin biosynthesis) to tips by contributing to the loading of auxin in vascular tissues and facilitating acropetal (base to tip) auxin transport within inner tissues of the root apex, and basipetal (tip to base) auxin transport within outer tissues of the root apex. May be involved in lateral roots and nodules formation. This chain is Auxin transporter-like protein 3 (LAX3), found in Medicago truncatula (Barrel medic).